A 692-amino-acid chain; its full sequence is ATP-dependent DNA helicase DinG (692 aa).

The Helicase ATP-binding domain maps to 16–293; the sequence is NLGNQLDNFI…AELAEYKKAA (278 aa). 56–63 contacts ATP; the sequence is AGTGIGKS. Cysteine 123 contacts [4Fe-4S] cluster. The DEAH box signature appears at 134 to 137; sequence NNDQ. [4Fe-4S] cluster is bound by residues cysteine 192 and cysteine 202. The DEAH box motif lies at 247-250; sequence DEAH. One can recognise a Helicase C-terminal domain in the interval 514-692; it reads LIKTLPEYLE…PPFKRVIEYS (179 aa).

Belongs to the helicase family. DinG subfamily. Type 1 sub-subfamily. It depends on [4Fe-4S] cluster as a cofactor.

It catalyses the reaction Couples ATP hydrolysis with the unwinding of duplex DNA at the replication fork by translocating in the 5'-3' direction. This creates two antiparallel DNA single strands (ssDNA). The leading ssDNA polymer is the template for DNA polymerase III holoenzyme which synthesizes a continuous strand.. It carries out the reaction ATP + H2O = ADP + phosphate + H(+). In terms of biological role, DNA-dependent ATPase and 5'-3' DNA helicase. Unwinds D-loops, R-loops, forked DNA and G-quadruplex DNA. This Photobacterium profundum (strain SS9) protein is ATP-dependent DNA helicase DinG.